We begin with the raw amino-acid sequence, 335 residues long: DNA-directed RNA polymerase RPB7 homolog (335 aa).

Belongs to the Asfivirus DNA-directed RNA polymerase RPB7 homolog family. In terms of assembly, part of the viral DNA-directed RNA polymerase that consists of 8 polII-like subunits (RPB1, RPB2, RPB3, RPB5, RPB6, RPB7, RPB9, RPB10), a capping enzyme and a termination factor.

The protein resides in the host cytoplasm. The protein localises to the virion. In terms of biological role, component of the DNA-directed RNA polymerase (RNAP) that catalyzes the transcription in the cytoplasm of viral DNA into RNA using the four ribonucleoside triphosphates as substrates. The sequence is that of DNA-directed RNA polymerase RPB7 homolog from African swine fever virus (isolate Pig/Kenya/KEN-50/1950) (ASFV).